The sequence spans 361 residues: UDP-N-acetylglucosamine--N-acetylmuramyl-(pentapeptide) pyrophosphoryl-undecaprenol N-acetylglucosamine transferase (361 aa).

UDP-N-acetyl-alpha-D-glucosamine contacts are provided by residues 12 to 14 (TGG), Asn-123, Arg-166, Ser-192, and Gln-293.

Belongs to the glycosyltransferase 28 family. MurG subfamily.

The protein localises to the cell inner membrane. It catalyses the reaction di-trans,octa-cis-undecaprenyl diphospho-N-acetyl-alpha-D-muramoyl-L-alanyl-D-glutamyl-meso-2,6-diaminopimeloyl-D-alanyl-D-alanine + UDP-N-acetyl-alpha-D-glucosamine = di-trans,octa-cis-undecaprenyl diphospho-[N-acetyl-alpha-D-glucosaminyl-(1-&gt;4)]-N-acetyl-alpha-D-muramoyl-L-alanyl-D-glutamyl-meso-2,6-diaminopimeloyl-D-alanyl-D-alanine + UDP + H(+). The protein operates within cell wall biogenesis; peptidoglycan biosynthesis. Cell wall formation. Catalyzes the transfer of a GlcNAc subunit on undecaprenyl-pyrophosphoryl-MurNAc-pentapeptide (lipid intermediate I) to form undecaprenyl-pyrophosphoryl-MurNAc-(pentapeptide)GlcNAc (lipid intermediate II). This is UDP-N-acetylglucosamine--N-acetylmuramyl-(pentapeptide) pyrophosphoryl-undecaprenol N-acetylglucosamine transferase from Caulobacter vibrioides (strain ATCC 19089 / CIP 103742 / CB 15) (Caulobacter crescentus).